A 109-amino-acid chain; its full sequence is Preprofallaxidin-8 (109 aa).

The N-terminal stretch at Met-1–Cys-22 is a signal peptide. A propeptide spanning residues Glu-23–Arg-46 is cleaved from the precursor. Residues Arg-27–Arg-46 form a disordered region. Residues Glu-30 to Ser-42 are compositionally biased toward acidic residues. Leu-62 bears the Leucine amide mark. Positions Ser-66–Arg-70 are excised as a propeptide. The residue at position 75 (Met-75) is a Methionine amide. A propeptide spanning residues Ser-79–Arg-83 is cleaved from the precursor. Met-88 carries the methionine amide modification. 2 consecutive propeptides follow at residues Ser-92–Arg-96 and Ala-108.

Belongs to the frog skin active peptide (FSAP) family. Brevinin subfamily. Expressed by the skin glands.

Its subcellular location is the secreted. Its function is as follows. Fallaxidin-2.1 shows no antibacterial activity against Gram-positive or Gram-negative bacteria. Does not inhibit the formation of NO by neuronal nitric oxide synthase. Has no effect on splenocyte proliferation or smooth muscle contraction. In terms of biological role, fallaxidin-3.2 shows antibacterial activity against the Gram-positive bacteria E.faecalis (MIC=100 uM) and L.lactis (MIC=500 uM). No antibacterial activity against the Gram-positive bacteria B.cereus, L.innocua, M.luteus, S.epidermidis, S.uberis and S.aureus, or the Gram-negative bacteria E.cloacae and E.coli. This Litoria fallax (Eastern dwarf tree frog) protein is Preprofallaxidin-8.